A 149-amino-acid chain; its full sequence is Flagellar basal-body protein FlbY (149 aa).

In terms of assembly, the basal body constitutes a major portion of the flagellar organelle and consists of five rings (E,L,P,S, and M) mounted on a central rod.

The protein localises to the bacterial flagellum basal body. The chain is Flagellar basal-body protein FlbY (flbY) from Caulobacter vibrioides (strain ATCC 19089 / CIP 103742 / CB 15) (Caulobacter crescentus).